The chain runs to 440 residues: Ferreportin (440 aa).

The Cytoplasmic portion of the chain corresponds to 1–8 (MKVQSLLR). The chain crosses the membrane as a helical span at residues 9 to 38 (IETQLLLGRLLTRSGDQAWDFVVPFALLVI). Residue aspartate 24 participates in Ca(2+) binding. The Extracellular segment spans residues 39-42 (FPGK). Residues 43-69 (LQVAAFYYLIVKIGTFLLTPSSGKWID) form a helical membrane-spanning segment. Topologically, residues 70–72 (THP) are cytoplasmic. The helical transmembrane segment at 73 to 103 (RIQVVKWGVWLQFFAILAGMVFFGMLDGLVR) threads the bilayer. Glutamine 84 is a Ca(2+) binding site. Residues 104–109 (AGGRES) are Extracellular-facing. A helical membrane pass occupies residues 110 to 145 (WLLSVLFIALALSGVMASLGSQITDISVGNDLAPSL). Residues 146 to 147 (VA) are Cytoplasmic-facing. The helical transmembrane segment at 148–176 (PEKLTHFNSWLRRIDLATEVGAPILAGAL) threads the bilayer. Residues 177-186 (FAFHPEQLPL) are Extracellular-facing. A helical membrane pass occupies residues 187-213 (AGLFLIGLWNLVSFVPEYFLLRNVIQR). Asparagine 196 and glutamate 203 together coordinate Ca(2+). Over 214–242 (SGLKIKVLTEAQSWKDTFHINLRGSFSDP) the chain is Cytoplasmic. The chain crosses the membrane as a helical span at residues 243–271 (IFWLILSYALLWLSVLSPHGVLLAAYLKD). Topologically, residues 272-276 (EMRLP) are extracellular. The helical transmembrane segment at 277–304 (ETEIGLFRGLGAVFGLISTVSFPYLVRR) threads the bilayer. Residues 305–306 (LG) are Cytoplasmic-facing. The helical transmembrane segment at 307–329 (LISSSRWHLGFQGVTLGIAVTAF) threads the bilayer. The Extracellular portion of the chain corresponds to 330-335 (AMGSTA). Residues 336–365 (SVYVFLGCILLSRVGLYGFSNGEFELRQRL) traverse the membrane as a helical segment. Over 366–370 (IPEGR) the chain is Cytoplasmic. Residues 371–395 (RGELNSLSSLTTTSATLILFSAGSL) traverse the membrane as a helical segment. Residues 396–398 (LPQ) lie on the Extracellular side of the membrane. The helical transmembrane segment at 399–424 (TEDFKYLVYVSLAAVLLANVVFIKWS) threads the bilayer. At 425 to 440 (SRQGVVTSGAAEPVES) the chain is on the cytoplasmic side.

Belongs to the ferroportin (FP) (TC 2.A.100) family. It depends on Ca(2+) as a cofactor.

The protein resides in the cell membrane. Functionally, iron transpoter that exports Fe(2+) from the cell. Also binds to Co(2+) and Ni(2+). May act as a multivalent divalent metal transporter. The transporter is composed of 12 transmembrane (TM) helices organized into N-terminal (TM1-6) and C-terminal (TM7-12) domains. The substrate-binding site is formed at the interface of the two domains and is alternately accessible from either side of the membrane. The transport cycle is viewed as a series of ligand-induced conformational changes that include open outward and open inward states. This is Ferreportin (slc39) from Bdellovibrio bacteriovorus (strain ATCC 15356 / DSM 50701 / NCIMB 9529 / HD100).